A 481-amino-acid chain; its full sequence is Aspartyl/glutamyl-tRNA(Asn/Gln) amidotransferase subunit B (481 aa).

This sequence belongs to the GatB/GatE family. GatB subfamily. As to quaternary structure, heterotrimer of A, B and C subunits.

The catalysed reaction is L-glutamyl-tRNA(Gln) + L-glutamine + ATP + H2O = L-glutaminyl-tRNA(Gln) + L-glutamate + ADP + phosphate + H(+). It carries out the reaction L-aspartyl-tRNA(Asn) + L-glutamine + ATP + H2O = L-asparaginyl-tRNA(Asn) + L-glutamate + ADP + phosphate + 2 H(+). Its function is as follows. Allows the formation of correctly charged Asn-tRNA(Asn) or Gln-tRNA(Gln) through the transamidation of misacylated Asp-tRNA(Asn) or Glu-tRNA(Gln) in organisms which lack either or both of asparaginyl-tRNA or glutaminyl-tRNA synthetases. The reaction takes place in the presence of glutamine and ATP through an activated phospho-Asp-tRNA(Asn) or phospho-Glu-tRNA(Gln). This chain is Aspartyl/glutamyl-tRNA(Asn/Gln) amidotransferase subunit B, found in Pseudomonas fluorescens (strain SBW25).